Consider the following 894-residue polypeptide: Valine--tRNA ligase (894 aa).

A 'HIGH' region motif is present at residues 48-58 (PNVTGFLHMGH). Positions 527–531 (KMSKS) match the 'KMSKS' region motif. Lys-530 provides a ligand contact to ATP. The stretch at 827 to 852 (LVDFDEEVKRINKSIEKLTRDIGMLS) forms a coiled coil.

This sequence belongs to the class-I aminoacyl-tRNA synthetase family. ValS type 1 subfamily. Monomer.

The protein localises to the cytoplasm. It catalyses the reaction tRNA(Val) + L-valine + ATP = L-valyl-tRNA(Val) + AMP + diphosphate. Catalyzes the attachment of valine to tRNA(Val). As ValRS can inadvertently accommodate and process structurally similar amino acids such as threonine, to avoid such errors, it has a 'posttransfer' editing activity that hydrolyzes mischarged Thr-tRNA(Val) in a tRNA-dependent manner. This Bdellovibrio bacteriovorus (strain ATCC 15356 / DSM 50701 / NCIMB 9529 / HD100) protein is Valine--tRNA ligase.